The sequence spans 73 residues: UPF0346 protein BLi02292/BL01432 (73 aa).

Belongs to the UPF0346 family.

In Bacillus licheniformis (strain ATCC 14580 / DSM 13 / JCM 2505 / CCUG 7422 / NBRC 12200 / NCIMB 9375 / NCTC 10341 / NRRL NRS-1264 / Gibson 46), this protein is UPF0346 protein BLi02292/BL01432.